The primary structure comprises 430 residues: C4-dicarboxylate transport protein (430 aa).

8 helical membrane-spanning segments follow: residues 9-29 (VLYV…HFYP), 45-65 (LIKM…IAGM), 79-99 (LLYF…ATHL), 149-169 (GEIL…AHLG), 185-205 (VLFG…FGAM), 223-243 (LIGT…GAIA), 308-328 (IYMT…LTWM), and 356-376 (AATL…ILGI).

It belongs to the dicarboxylate/amino acid:cation symporter (DAACS) (TC 2.A.23) family.

It localises to the cell inner membrane. In terms of biological role, responsible for the transport of dicarboxylates such as succinate, fumarate, and malate from the periplasm across the membrane. This chain is C4-dicarboxylate transport protein, found in Burkholderia orbicola (strain MC0-3).